Reading from the N-terminus, the 258-residue chain is Tryptophan synthase alpha chain (258 aa).

Catalysis depends on proton acceptor residues Glu52 and Asp63.

It belongs to the TrpA family. As to quaternary structure, tetramer of two alpha and two beta chains.

It catalyses the reaction (1S,2R)-1-C-(indol-3-yl)glycerol 3-phosphate + L-serine = D-glyceraldehyde 3-phosphate + L-tryptophan + H2O. The protein operates within amino-acid biosynthesis; L-tryptophan biosynthesis; L-tryptophan from chorismate: step 5/5. The alpha subunit is responsible for the aldol cleavage of indoleglycerol phosphate to indole and glyceraldehyde 3-phosphate. The sequence is that of Tryptophan synthase alpha chain from Streptococcus pneumoniae serotype 19F (strain G54).